Here is a 467-residue protein sequence, read N- to C-terminus: tRNA (guanine-N(7)-)-methyltransferase non-catalytic subunit wdr4 (467 aa).

3 WD repeats span residues 61-100 (QHTG…KNIK), 164-203 (GHYS…DIES), and 207-249 (GHTK…QTVD). Residues 415-467 (DIDDTTDINNNNKNKNQETIQDSRPLKLRKMTIEGDKEIQKELEEKESKKQEE) are disordered. A compositionally biased stretch (low complexity) spans 421–434 (DINNNNKNKNQETI). Residues 445–467 (MTIEGDKEIQKELEEKESKKQEE) are compositionally biased toward basic and acidic residues.

Belongs to the WD repeat TRM82 family. As to quaternary structure, forms a heterodimer with the catalytic subunit mettl1.

The protein resides in the nucleus. It functions in the pathway tRNA modification; N(7)-methylguanine-tRNA biosynthesis. Required for the formation of N(7)-methylguanine at position 46 (m7G46) in tRNA. In the complex, it is required to stabilize and induce conformational changes of the catalytic subunit. This is tRNA (guanine-N(7)-)-methyltransferase non-catalytic subunit wdr4 (wdr4) from Dictyostelium discoideum (Social amoeba).